The primary structure comprises 231 residues: Orotidine 5'-phosphate decarboxylase (231 aa).

Substrate-binding positions include Asp-11, Lys-33, 60-69, Thr-120, Arg-181, Gln-190, Gly-210, and Arg-211; that span reads DLKFHDIPNT. Residue Lys-62 is the Proton donor of the active site.

This sequence belongs to the OMP decarboxylase family. Type 1 subfamily. As to quaternary structure, homodimer.

The enzyme catalyses orotidine 5'-phosphate + H(+) = UMP + CO2. The protein operates within pyrimidine metabolism; UMP biosynthesis via de novo pathway; UMP from orotate: step 2/2. Functionally, catalyzes the decarboxylation of orotidine 5'-monophosphate (OMP) to uridine 5'-monophosphate (UMP). This is Orotidine 5'-phosphate decarboxylase from Colwellia psychrerythraea (strain 34H / ATCC BAA-681) (Vibrio psychroerythus).